We begin with the raw amino-acid sequence, 217 residues long: MATEDREMMEGRGAGESCPTFPKMAPDDPMSEGKPRASLPQEADTPKPDSSYDYLEEMETCEDGGCPGPPKVLSSKAGPATTKGQAGDGLELAELPSVPATAAPGSPVRERDAEMELEKVRMEFELKRLKYLHEENERQRQHEEVMEQLQQQATPRLFSGGLQDLLLPQNQFAMFLYCFIFIHIIYVTKEMIFFLFSKHYLFCIAAILLCLIKTLWS.

Residues 1 to 10 (MATEDREMME) are compositionally biased toward basic and acidic residues. The segment at 1-87 (MATEDREMME…GPATTKGQAG (87 aa)) is disordered. Residues 109 to 154 (RERDAEMELEKVRMEFELKRLKYLHEENERQRQHEEVMEQLQQQAT) adopt a coiled-coil conformation. 2 helical membrane passes run 165–185 (LLLPQNQFAMFLYCFIFIHII) and 192–212 (IFFLFSKHYLFCIAAILLCLI).

Its subcellular location is the membrane. The protein is Transmembrane protein 247 of Bos taurus (Bovine).